Consider the following 461-residue polypeptide: Transcription factor GTE3, chloroplastic (461 aa).

Positions 1-11 are enriched in gly residues; sequence MASGPIAGGGV. The interval 1–41 is disordered; it reads MASGPIAGGGVSKTKHKWSDSGNKSQKRSKPTVANSNSLGL. The N-terminal 51 residues, 1-51, are a transit peptide targeting the chloroplast; the sequence is MASGPIAGGGVSKTKHKWSDSGNKSQKRSKPTVANSNSLGLEDNHQMMKIS. Positions 114–220 constitute a Bromo domain; that stretch reads KGTVQILKSC…NLFEEKWVPL (107 aa). In terms of domain architecture, NET spans 298-379; sequence LVEEASANRD…EYKESLSKKK (82 aa). Positions 376-392 are enriched in basic and acidic residues; sequence SKKKEEQGLDSERDAES. The disordered stretch occupies residues 376–461; the sequence is SKKKEEQGLD…SSGHESDTGN (86 aa). Over residues 393-412 the composition is skewed to polar residues; it reads FHNSVHESNTLVTGLESSKV. A compositionally biased stretch (low complexity) spans 429–451; it reads GGSSSSNSSSSGSGSGSSGSDSD. Over residues 452–461 the composition is skewed to basic and acidic residues; the sequence is SSGHESDTGN.

In terms of assembly, interacts with SIZ1 (via PHD domain). Sumoylated by SIZ1. Sumoylation reduces capacity to bind to acetylated histone H3.

Its subcellular location is the plastid. It localises to the chloroplast. Its function is as follows. Probable transcription factor that binds to acetylated histone H3. This Arabidopsis thaliana (Mouse-ear cress) protein is Transcription factor GTE3, chloroplastic (GTE3).